A 512-amino-acid chain; its full sequence is Histidine ammonia-lyase (512 aa).

A cross-link (5-imidazolinone (Cys-Gly)) is located at residues 143–145 (CSG). 2,3-didehydroalanine (Ser) is present on serine 144.

Belongs to the PAL/histidase family. Post-translationally, contains an active site 4-methylidene-imidazol-5-one (MIO), which is formed autocatalytically by cyclization and dehydration of residues Cys-Ser-Gly.

It localises to the cytoplasm. The enzyme catalyses L-histidine = trans-urocanate + NH4(+). Its pathway is amino-acid degradation; L-histidine degradation into L-glutamate; N-formimidoyl-L-glutamate from L-histidine: step 1/3. The sequence is that of Histidine ammonia-lyase from Streptomyces avermitilis (strain ATCC 31267 / DSM 46492 / JCM 5070 / NBRC 14893 / NCIMB 12804 / NRRL 8165 / MA-4680).